The chain runs to 347 residues: Phosphate acyltransferase (347 aa).

This sequence belongs to the PlsX family. In terms of assembly, homodimer. Probably interacts with PlsY.

It localises to the cytoplasm. The catalysed reaction is a fatty acyl-[ACP] + phosphate = an acyl phosphate + holo-[ACP]. The protein operates within lipid metabolism; phospholipid metabolism. In terms of biological role, catalyzes the reversible formation of acyl-phosphate (acyl-PO(4)) from acyl-[acyl-carrier-protein] (acyl-ACP). This enzyme utilizes acyl-ACP as fatty acyl donor, but not acyl-CoA. This Oleidesulfovibrio alaskensis (strain ATCC BAA-1058 / DSM 17464 / G20) (Desulfovibrio alaskensis) protein is Phosphate acyltransferase.